The sequence spans 449 residues: MQVTVNEHDAVECVATATPAGNREAHAHGTDKLAIEGGRRLAGEIAVSGAKNAALPILCAGLLSAEPVRLDNVPDLKDVRTTLALLGQMGMREETDGARVVLDASRVDNPVAPYELVKTMRASILVLGPLLARFGYAKVSLPGGCAIGARPVDQHIKGLQAMGAEIHIEHGYIEARAKRLSGARIVTDMITVTGTENLLMAATLADGETVIENAAREPEVTDLAHLLVAMGAKIDGIGTDRLVIQGVERLHGATHAVIPDRIEAGTFLCAVAAAGGDVTLTGMRAHILDAVIDKLREAGATIDEGVDTLRVRMDGRPSAVAIRTSEYPAFPTDMQAQFMALNAVAQGAAQVTETIFENRFMHVQELNRLGANIAVDGNTALVTGVPKLSGASVMATDLRASASLVIAGLCAQGETLVERIYHLDRGYDRMETKLTAVGANVRRISGSEA.

51-52 (KN) provides a ligand contact to phosphoenolpyruvate. Residue Arg121 participates in UDP-N-acetyl-alpha-D-glucosamine binding. Residue Cys145 is the Proton donor of the active site. Cys145 bears the 2-(S-cysteinyl)pyruvic acid O-phosphothioketal mark. UDP-N-acetyl-alpha-D-glucosamine-binding positions include 150–154 (RPVDQ), Asp333, and Ile355.

Belongs to the EPSP synthase family. MurA subfamily.

The protein resides in the cytoplasm. It catalyses the reaction phosphoenolpyruvate + UDP-N-acetyl-alpha-D-glucosamine = UDP-N-acetyl-3-O-(1-carboxyvinyl)-alpha-D-glucosamine + phosphate. The protein operates within cell wall biogenesis; peptidoglycan biosynthesis. Functionally, cell wall formation. Adds enolpyruvyl to UDP-N-acetylglucosamine. The chain is UDP-N-acetylglucosamine 1-carboxyvinyltransferase from Burkholderia mallei (strain ATCC 23344).